The sequence spans 508 residues: Purine-cytosine permease fcyB (508 aa).

Residues 1-72 (MAGAFDFDLE…AEQTDTSVFN (72 aa)) are Cytoplasmic-facing. A helical transmembrane segment spans residues 73–93 (IGSMWLAANMVVSSFAIGVLG). Residues 94–104 (KSVYSLGFVDA) are Extracellular-facing. Residues 105–125 (ILTVLFFNLLGIMTVCFFSCF) form a helical membrane-spanning segment. Residues 126–147 (GPFGLRQMVFSRLWFGWYVTKG) lie on the Cytoplasmic side of the membrane. The chain crosses the membrane as a helical span at residues 148 to 168 (FAVLNILACLGWSAANAIVGA). At 169–177 (QMLHAVNSD) the chain is on the extracellular side. Residues 178–198 (VPGFAAILIISICTLLVTFAG) traverse the membrane as a helical segment. Residues 199–200 (YK) lie on the Cytoplasmic side of the membrane. A helical transmembrane segment spans residues 201–221 (VVHLYEYWSWIPTFIVFMIIL). Residues 222–243 (GTFAHSGDFQNIPMGVGTSEMG) lie on the Extracellular side of the membrane. A helical membrane pass occupies residues 244 to 264 (SVLSFGSAVYGFATGWTSYAA). At 265–278 (DYTVYQPANRSKRK) the chain is on the cytoplasmic side. Residues 279–299 (IFLSTWLGLIVPLLFVEMLGV) traverse the membrane as a helical segment. Residues 300 to 323 (AVMTATDIKGSKYDVGYATSGNGG) lie on the Extracellular side of the membrane. A helical membrane pass occupies residues 324–344 (LIAAVLQPLGGFGDFCLVILA). Over 345–374 (LSIVANNCPNFYSVALTVQVLSRYAQRVPR) the chain is Cytoplasmic. Residues 375 to 395 (FIWTLFGTGVSIAIAIPGYSH) traverse the membrane as a helical segment. At 396 to 404 (FETVLENFM) the chain is on the extracellular side. A helical transmembrane segment spans residues 405–425 (NFIAYWLAIYSAIAIMDHFVF). Over 426–442 (KRGFSGYVVENFDKREK) the chain is Cytoplasmic. A helical membrane pass occupies residues 443–463 (LPVGIAATIAFGFGVAGMITG). At 464–477 (MSQPWYVGPIARHA) the chain is on the extracellular side. Residues 478–498 (AGGDVGFELGFAFAAFSYLCL) form a helical membrane-spanning segment. Topologically, residues 499–508 (RPFEIKFFGR) are cytoplasmic.

The protein belongs to the purine-cytosine permease (2.A.39) family.

It localises to the cell membrane. Functionally, this permease has a broad specificity towards purines, and also transports cytosine, but neither uracil nor thymine. Contributes very little in purine uptake. Its major role may be the uptake of cytosine. This chain is Purine-cytosine permease fcyB (fcyB), found in Emericella nidulans (strain FGSC A4 / ATCC 38163 / CBS 112.46 / NRRL 194 / M139) (Aspergillus nidulans).